A 65-amino-acid chain; its full sequence is Adrenergic toxin rho-elapitoxin-Dp1b (65 aa).

4 cysteine pairs are disulfide-bonded: C3–C24, C17–C42, C46–C57, and C58–C63.

The protein belongs to the three-finger toxin family. Short-chain subfamily. Aminergic toxin sub-subfamily. In terms of tissue distribution, expressed by the venom gland.

It is found in the secreted. Its function is as follows. Highly potent on various alpha-adrenoceptors (ADRA) (subnanomolar affinity for ADRA1A). Order of potency is the following: ADRA1A (Ki=0.37 nM) &gt; ADRA1B (Ki=10.47 nM) &gt; ADRA1D (Ki=104.71 nM) &gt; ADRA2C (Ki=165.96 nM). Were also found to reversibly bind to muscarinic acetylcholine receptors (CHRM), but the affinity is much weaker (CHRM1, Ki=1778.28 nM; CHRM4, Ki=4466.84 nM; CHRM2, Ki=17782.79 nM). This chain is Adrenergic toxin rho-elapitoxin-Dp1b, found in Dendroaspis polylepis polylepis (Black mamba).